The primary structure comprises 196 residues: SAGA-associated factor 11 homolog (196 aa).

The segment at 1–22 (MSAANMPTTTGAQGSGNQVPTT) is disordered. The segment at 106–127 (CTCPNCDRLVAAARFAPHLEKC) adopts an SGF11-type zinc-finger fold. The disordered stretch occupies residues 144 to 196 (TKEGASSAHLHSAGNAGGTDDEDDVDWSSDKRRKKSNQNSRNNGSKKNNGKTF). S172 is subject to Phosphoserine. The span at 180 to 196 (NQNSRNNGSKKNNGKTF) shows a compositional bias: low complexity.

It belongs to the SGF11 family. In terms of assembly, component of some SAGA transcription coactivator-HAT complexes, at least composed of Ada2b, not/nonstop, Pcaf/Gcn5, Sgf11 and Spt3. Within the SAGA complex, Sgf11, e(y)2, and not/nonstop form an additional subcomplex of SAGA called the DUB module (deubiquitination module). Interacts directly with not/nonstop. Interacts with the AMEX complex component xmas-2. Interacts with Cbp80; important for promoter recruitment of Sgf11 that is not associated with the DUB module.

It is found in the nucleus. It localises to the nucleoplasm. Its subcellular location is the cytoplasm. Its function is as follows. Component of the transcription regulatory histone acetylation (HAT) complex SAGA, a multiprotein complex that activates transcription by remodeling chromatin and mediating histone acetylation and deubiquitination. Within the SAGA complex, participates in a subcomplex that specifically deubiquitinates histone H2B. The SAGA complex is recruited to specific gene promoters by activators, where it is required for transcription. Required for nuclear receptor-mediated transactivation. Binds independently on SAGA to promoters in an RNA-dependent manner. Binds to mRNA and is essential for total mRNA export from the nucleus. Required to counteract heterochromatin silencing. Controls the development of neuronal connectivity in visual system by being required for accurate axon targeting in the optic lobe. Required for expression of ecdysone-induced genes such as br/broad. In Drosophila yakuba (Fruit fly), this protein is SAGA-associated factor 11 homolog.